The following is a 281-amino-acid chain: UPF0750 membrane protein YvjA (281 aa).

Transmembrane regions (helical) follow at residues 14 to 34 (YVYI…FLLP), 56 to 76 (AAYV…ILLG), 77 to 97 (GKFG…VFLT), 108 to 128 (LLAA…VYLG), and 149 to 169 (SLGK…MIVF).

Belongs to the UPF0750 family.

It is found in the cell membrane. This is UPF0750 membrane protein YvjA (yvjA) from Bacillus subtilis (strain 168).